Consider the following 27-residue polypeptide: GFGALFKFLAKKVAKTVAKQVAKKQME.

Glu-27 bears the Glutamic acid 1-amide mark.

As to expression, expressed by the venom gland.

Its subcellular location is the secreted. This is Cupiennin-3d from Cupiennius salei (American wandering spider).